We begin with the raw amino-acid sequence, 398 residues long: S-adenosylmethionine synthase (398 aa).

H17 contacts ATP. D19 provides a ligand contact to Mg(2+). E45 is a K(+) binding site. Positions 58 and 101 each coordinate L-methionine. Residues 101 to 111 are flexible loop; it reads QSPDIAQGVDT. Residues 176 to 178, 243 to 244, D252, 258 to 259, and K279 contribute to the ATP site; these read DGK, RF, and RK. Position 252 (D252) interacts with L-methionine. Residue K283 coordinates L-methionine.

It belongs to the AdoMet synthase family. Homotetramer; dimer of dimers. Mg(2+) serves as cofactor. It depends on K(+) as a cofactor.

The protein localises to the cytoplasm. It catalyses the reaction L-methionine + ATP + H2O = S-adenosyl-L-methionine + phosphate + diphosphate. The protein operates within amino-acid biosynthesis; S-adenosyl-L-methionine biosynthesis; S-adenosyl-L-methionine from L-methionine: step 1/1. Its function is as follows. Catalyzes the formation of S-adenosylmethionine (AdoMet) from methionine and ATP. The overall synthetic reaction is composed of two sequential steps, AdoMet formation and the subsequent tripolyphosphate hydrolysis which occurs prior to release of AdoMet from the enzyme. In Staphylococcus saprophyticus subsp. saprophyticus (strain ATCC 15305 / DSM 20229 / NCIMB 8711 / NCTC 7292 / S-41), this protein is S-adenosylmethionine synthase.